A 270-amino-acid chain; its full sequence is MATYAIGDIQGCYEPLQCLLEKIDFDTAKDKLWLVGDLINRGPDSLATLRFLYSIRSSLEVVLGNHDLHLLAVYFGLRKQNKSDTLTPILEAPDAPELIHWLRQQKLMHHDATLGYALVHAGIPPIWSLDKALACAREVEDYLRGPDFKTFLAHMYGNQPSVWDDSLQGQERLRLITNYFTRMRFCSADGELELTTKENAAAAPPGFAPWFSFMQRKTRQDRILFGHWAALEGQVSTANVYALDTGCVWGGYLTAMCLETGALVQCACEA.

It belongs to the Ap4A hydrolase family.

The enzyme catalyses P(1),P(4)-bis(5'-adenosyl) tetraphosphate + H2O = 2 ADP + 2 H(+). Its function is as follows. Hydrolyzes diadenosine 5',5'''-P1,P4-tetraphosphate to yield ADP. In Cellvibrio japonicus (strain Ueda107) (Pseudomonas fluorescens subsp. cellulosa), this protein is Bis(5'-nucleosyl)-tetraphosphatase, symmetrical.